The chain runs to 537 residues: Cytochrome P450 monooxygenase ltmQ (537 aa).

Residues 10–30 traverse the membrane as a helical segment; sequence FPKLNFATIVISGATIIGIIF. 3 N-linked (GlcNAc...) asparagine glycosylation sites follow: Asn-182, Asn-188, and Asn-310. Cys-476 is a binding site for heme.

It belongs to the cytochrome P450 family. It depends on heme as a cofactor.

It localises to the membrane. The protein operates within secondary metabolite biosynthesis. Functionally, cytochrome P450 monooxygenase; part of the gene clusters that mediates the biosynthesis of lolitrems, indole-diterpene mycotoxins that are potent tremorgens in mammals, and are synthesized by clavicipitaceous fungal endophytes in association with their grass hosts. The geranylgeranyl diphosphate (GGPP) synthase ltmG is proposed to catalyze the first step in lolitrem biosynthesis. LtmG catalyzes a series of iterative condensations of isopentenyl diphosphate (IPP) with dimethylallyl diphosphate (DMAPP), geranyl diphosphate (GPP), and farnesyl diphosphate (FPP), to form GGPP. GGPP then condenses with indole-3-glycerol phosphate to form 3-geranylgeranylindole, an acyclic intermediate, to be incorporated into paxilline. Either ltmG or ltmC could be responsible for this step, as both are putative prenyl transferases. The FAD-dependent monooxygenase ltmM then catalyzes the epoxidation of the two terminal alkenes of the geranylgeranyl moiety, which is subsequently cyclized by ltmB, to paspaline. The cytochrome P450 monooxygenases ltmQ and ltmP can sequentially oxidize paspaline to terpendole E and terpendole F. Alternatively, ltmP converts paspaline to an intermediate which is oxidized by ltmQ to terpendole F. LtmF, ltmK, ltmE and ltmJ appear to be unique to the epichloe endophytes. The prenyltransferase ltmF is involved in the 27-hydroxyl-O-prenylation. The cytochrome P450 monooxygenase ltmK is required for the oxidative acetal ring formation. The multi-functional prenyltransferase ltmE is required for C20- and C21-prenylations of the indole ring of paspalanes and acts together with the cytochrome P450 monooxygenase ltmJ to yield lolitremanes by multiple oxidations and ring closures. The stereoisomer pairs of lolitriol and lolitrem N or lolitrem B and lolitrem F may be attributed to variations in the way in which ring closure can occur under the action of ltmJ. While the major product of this pathway is lolitrem B, the prenyl transferases and cytochrome P450 monooxygenases identified in this pathway have a remarkable versatility in their regio- and stereo-specificities to generate a diverse range of metabolites that are products of a metabolic grid rather than a linear pathway. The sequence is that of Cytochrome P450 monooxygenase ltmQ from Epichloe festucae var. lolii (Neotyphodium lolii).